Reading from the N-terminus, the 410-residue chain is Cysteine desulfurase IscS (410 aa).

Pyridoxal 5'-phosphate is bound by residues 80-81, N160, Q188, and 208-210; these read AT and SGH. K211 bears the N6-(pyridoxal phosphate)lysine mark. T248 is a binding site for pyridoxal 5'-phosphate. The Cysteine persulfide intermediate role is filled by C334. C334 provides a ligand contact to [2Fe-2S] cluster.

It belongs to the class-V pyridoxal-phosphate-dependent aminotransferase family. NifS/IscS subfamily. In terms of assembly, homodimer. Forms a heterotetramer with IscU, interacts with other sulfur acceptors. Pyridoxal 5'-phosphate is required as a cofactor.

It localises to the cytoplasm. The enzyme catalyses (sulfur carrier)-H + L-cysteine = (sulfur carrier)-SH + L-alanine. The protein operates within cofactor biosynthesis; iron-sulfur cluster biosynthesis. Functionally, master enzyme that delivers sulfur to a number of partners involved in Fe-S cluster assembly, tRNA modification or cofactor biosynthesis. Catalyzes the removal of elemental sulfur atoms from cysteine to produce alanine. Functions as a sulfur delivery protein for Fe-S cluster synthesis onto IscU, an Fe-S scaffold assembly protein, as well as other S acceptor proteins. The chain is Cysteine desulfurase IscS from Rickettsia akari (strain Hartford).